We begin with the raw amino-acid sequence, 220 residues long: MNKAKLIDHTLLKTDSTKEQIDTIINEAKAYQFKSVCVNPTHVQYASEQLKGTDVLVCTVIGFPLGATTTAVKSYETKDAINNGAQEIDMVINIGALKDGRFDKVQNDIEAVVQAANGKTVKVIIETVLLTEKEKIKACQLSEAAGAHFVKTSTGFAGGGATVEDVKLMKDTVGDRLEVKASGGVRNLEDFNNMIEAGATRIGASAGVQIIQGLESNTDY.

Asp-89 acts as the Proton donor/acceptor in catalysis. Lys-151 acts as the Schiff-base intermediate with acetaldehyde in catalysis. Lys-180 serves as the catalytic Proton donor/acceptor.

Belongs to the DeoC/FbaB aldolase family. DeoC type 1 subfamily.

Its subcellular location is the cytoplasm. The catalysed reaction is 2-deoxy-D-ribose 5-phosphate = D-glyceraldehyde 3-phosphate + acetaldehyde. The protein operates within carbohydrate degradation; 2-deoxy-D-ribose 1-phosphate degradation; D-glyceraldehyde 3-phosphate and acetaldehyde from 2-deoxy-alpha-D-ribose 1-phosphate: step 2/2. In terms of biological role, catalyzes a reversible aldol reaction between acetaldehyde and D-glyceraldehyde 3-phosphate to generate 2-deoxy-D-ribose 5-phosphate. The sequence is that of Deoxyribose-phosphate aldolase from Staphylococcus epidermidis (strain ATCC 35984 / DSM 28319 / BCRC 17069 / CCUG 31568 / BM 3577 / RP62A).